A 34-amino-acid polypeptide reads, in one-letter code: Protamine-Z1/Z2 (34 aa).

Residues 1 to 34 (PRRRRRSSRPVRRRRRYRRSTVARRRRRVVRRRR) form a disordered region.

As to expression, testis.

It localises to the nucleus. The protein localises to the chromosome. Functionally, protamines substitute for histones in the chromatin of sperm during the haploid phase of spermatogenesis. They compact sperm DNA into a highly condensed, stable and inactive complex. This chain is Protamine-Z1/Z2, found in Thunnus thynnus (Atlantic bluefin tuna).